The following is a 269-amino-acid chain: 4-hydroxy-tetrahydrodipicolinate reductase (269 aa).

NAD(+) contacts are provided by residues 8–13 (GAAGRM) and E34. Residue R35 coordinates NADP(+). Residues 98–100 (GTT) and 122–125 (APNY) contribute to the NAD(+) site. Residue H155 is the Proton donor/acceptor of the active site. Residue H156 coordinates (S)-2,3,4,5-tetrahydrodipicolinate. K159 functions as the Proton donor in the catalytic mechanism. Residue 165–166 (GT) coordinates (S)-2,3,4,5-tetrahydrodipicolinate.

This sequence belongs to the DapB family.

It is found in the cytoplasm. The enzyme catalyses (S)-2,3,4,5-tetrahydrodipicolinate + NAD(+) + H2O = (2S,4S)-4-hydroxy-2,3,4,5-tetrahydrodipicolinate + NADH + H(+). It carries out the reaction (S)-2,3,4,5-tetrahydrodipicolinate + NADP(+) + H2O = (2S,4S)-4-hydroxy-2,3,4,5-tetrahydrodipicolinate + NADPH + H(+). The protein operates within amino-acid biosynthesis; L-lysine biosynthesis via DAP pathway; (S)-tetrahydrodipicolinate from L-aspartate: step 4/4. In terms of biological role, catalyzes the conversion of 4-hydroxy-tetrahydrodipicolinate (HTPA) to tetrahydrodipicolinate. This Vibrio atlanticus (strain LGP32) (Vibrio splendidus (strain Mel32)) protein is 4-hydroxy-tetrahydrodipicolinate reductase.